We begin with the raw amino-acid sequence, 631 residues long: tRNA 5-methylaminomethyl-2-thiouridine biosynthesis bifunctional protein MnmC (631 aa).

Residues 1–243 (MITDLRPPAM…KREMLTGRLP (243 aa)) form a tRNA (mnm(5)s(2)U34)-methyltransferase region. The tract at residues 261 to 631 (IGAGIAGAAL…GRLYRNQLTV (371 aa)) is FAD-dependent cmnm(5)s(2)U34 oxidoreductase.

It in the N-terminal section; belongs to the methyltransferase superfamily. tRNA (mnm(5)s(2)U34)-methyltransferase family. This sequence in the C-terminal section; belongs to the DAO family. It depends on FAD as a cofactor.

Its subcellular location is the cytoplasm. It carries out the reaction 5-aminomethyl-2-thiouridine(34) in tRNA + S-adenosyl-L-methionine = 5-methylaminomethyl-2-thiouridine(34) in tRNA + S-adenosyl-L-homocysteine + H(+). Catalyzes the last two steps in the biosynthesis of 5-methylaminomethyl-2-thiouridine (mnm(5)s(2)U) at the wobble position (U34) in tRNA. Catalyzes the FAD-dependent demodification of cmnm(5)s(2)U34 to nm(5)s(2)U34, followed by the transfer of a methyl group from S-adenosyl-L-methionine to nm(5)s(2)U34, to form mnm(5)s(2)U34. This Marinobacter nauticus (strain ATCC 700491 / DSM 11845 / VT8) (Marinobacter aquaeolei) protein is tRNA 5-methylaminomethyl-2-thiouridine biosynthesis bifunctional protein MnmC.